The chain runs to 162 residues: uncharacterized protein (162 aa).

The first 19 residues, 1–19 (MARVYILFFSVFFVFPLFS), serve as a signal peptide directing secretion. 2 helical membrane-spanning segments follow: residues 53 to 75 (LSIG…IRLI) and 105 to 127 (IVFG…YRAV).

The protein localises to the cell membrane. This is an uncharacterized protein from Treponema pallidum (strain Nichols).